We begin with the raw amino-acid sequence, 147 residues long: MTILCELESGVSLPEYATEGASGADLRANIKEPMAVLPGQRVLVPTGIKMQIPQGYEVQVRPRSGFALKHGIMVVNSPGTIDADYRGEVCIILANFGESTFIIEPKMRIAQAVVAPVVQAKFIAVDQEEGLTTTSRGSRGFGHTGEK.

Residues 63–65, N76, and 80–82 contribute to the substrate site; these read RSG and TID.

This sequence belongs to the dUTPase family. Mg(2+) serves as cofactor.

The catalysed reaction is dUTP + H2O = dUMP + diphosphate + H(+). It functions in the pathway pyrimidine metabolism; dUMP biosynthesis; dUMP from dCTP (dUTP route): step 2/2. In terms of biological role, this enzyme is involved in nucleotide metabolism: it produces dUMP, the immediate precursor of thymidine nucleotides and it decreases the intracellular concentration of dUTP so that uracil cannot be incorporated into DNA. This chain is Deoxyuridine 5'-triphosphate nucleotidohydrolase, found in Chlamydia abortus (strain DSM 27085 / S26/3) (Chlamydophila abortus).